Consider the following 348-residue polypeptide: Alcohol dehydrogenase 1 (348 aa).

An N-acetylserine modification is found at Ser2. Cys44 lines the Zn(2+) pocket. 3 residues coordinate NAD(+): His45, Thr46, and His49. Positions 67, 68, 98, 101, 104, 112, and 154 each coordinate Zn(2+). NAD(+) contacts are provided by Gly181, Gly182, Leu183, Asp202, and Lys207. Ser213 carries the post-translational modification Phosphoserine. An NAD(+)-binding site is contributed by Phe222. The residue at position 223 (Thr223) is a Phosphothreonine. Glycyl lysine isopeptide (Lys-Gly) (interchain with G-Cter in ubiquitin) cross-links involve residues Lys226 and Lys234. Residues Val269 and Met271 each contribute to the NAD(+) site. At Ser279 the chain carries Phosphoserine. Residue Lys287 forms a Glycyl lysine isopeptide (Lys-Gly) (interchain with G-Cter in ubiquitin) linkage. Residues Ser294 and Val296 each coordinate NAD(+). The residue at position 316 (Ser316) is a Phosphoserine. A Glycyl lysine isopeptide (Lys-Gly) (interchain with G-Cter in ubiquitin) cross-link involves residue Lys319. Residue Arg341 participates in NAD(+) binding.

This sequence belongs to the zinc-containing alcohol dehydrogenase family. Homotetramer. Requires Zn(2+) as cofactor.

It is found in the cytoplasm. It carries out the reaction a primary alcohol + NAD(+) = an aldehyde + NADH + H(+). It catalyses the reaction a secondary alcohol + NAD(+) = a ketone + NADH + H(+). The enzyme catalyses ethanol + NAD(+) = acetaldehyde + NADH + H(+). The catalysed reaction is allyl alcohol + NADP(+) = acrolein + NADPH + H(+). It carries out the reaction 1-propanol + NAD(+) = propanal + NADH + H(+). It catalyses the reaction butan-1-ol + NAD(+) = butanal + NADH + H(+). The enzyme catalyses hexan-1-ol + NAD(+) = hexanal + NADH + H(+). The catalysed reaction is (R)-lactaldehyde + NAD(+) = methylglyoxal + NADH + H(+). It carries out the reaction octan-1-ol + NAD(+) = octanal + NADH + H(+). It catalyses the reaction butan-2-ol + NAD(+) = butan-2-one + NADH + H(+). The enzyme catalyses propan-2-ol + NAD(+) = acetone + NADH + H(+). The catalysed reaction is isobutanol + NAD(+) = 2-methylpropanal + NADH + H(+). In terms of biological role, preferentially fermentative isozyme that reduces acetaldehyde to ethanol during the fermentation of glucose. Major enzyme required for the conversion of acetaldehyde to ethanol. Plays a key role in the carbohydrate metabolism through the regeneration of NAD(+) from glycolytic NADH. In the reverse reaction, preferentially catalyzes the conversion of primary unbranched alcohols to their corresponding aldehydes. Also shows activity toward secondary alcohols. Most active with ethanol, and its activity decreases as the size of the alcohol is increased. The chain is Alcohol dehydrogenase 1 (ADH1) from Saccharomyces cerevisiae (strain ATCC 204508 / S288c) (Baker's yeast).